The sequence spans 504 residues: Maturase K (504 aa).

Belongs to the intron maturase 2 family. MatK subfamily.

Its subcellular location is the plastid. The protein localises to the chloroplast. Usually encoded in the trnK tRNA gene intron. Probably assists in splicing its own and other chloroplast group II introns. In Simmondsia chinensis (Jojoba), this protein is Maturase K.